We begin with the raw amino-acid sequence, 348 residues long: Succinoglycan biosynthesis protein ExoO (348 aa).

The disordered stretch occupies residues 322–348 (HSAPRAAPVTAAAERSPLGNDPRISKG). A compositionally biased stretch (low complexity) spans 324–334 (APRAAPVTAAA).

It belongs to the glycosyltransferase 2 family.

It is found in the cytoplasm. It participates in glycan metabolism; exopolysaccharide biosynthesis. Functionally, glycosyltransferase required for the synthesis of succinoglycan (EPS I). Needed for the addition of the fifth sugar (glucose), catalyzes the formation of a beta-1,6 linkage between the fourth and fifth sugar. In Rhizobium meliloti (strain 1021) (Ensifer meliloti), this protein is Succinoglycan biosynthesis protein ExoO (exoO).